Consider the following 647-residue polypeptide: Putative ankyrin repeat protein L764 (647 aa).

9 ANK repeats span residues 123–154, 202–231, 233–256, 258–284, 289–319, 348–377, 401–431, 529–558, and 588–617; these read LKDR…QINL, LTQE…EYDL, EIIN…SLNE, NVNI…TINS, SMFS…DLTV, DCNL…DLKK, NDVN…NIDL, FILK…DNNE, and NGQN…DVKN.

This chain is Putative ankyrin repeat protein L764, found in Acanthamoeba polyphaga (Amoeba).